The primary structure comprises 528 residues: Phosphoenolpyruvate carboxykinase (ATP) (528 aa).

3 residues coordinate substrate: Arg-56, Tyr-192, and Lys-198. ATP contacts are provided by residues Lys-198, His-217, and Gly-233 to Thr-241. The Mn(2+) site is built by Lys-198 and His-217. Residue Asp-254 coordinates Mn(2+). ATP-binding residues include Glu-282, Arg-319, and Thr-444. Arg-319 contributes to the substrate binding site.

The protein belongs to the phosphoenolpyruvate carboxykinase (ATP) family. Requires Mn(2+) as cofactor.

The protein resides in the cytoplasm. The catalysed reaction is oxaloacetate + ATP = phosphoenolpyruvate + ADP + CO2. Its pathway is carbohydrate biosynthesis; gluconeogenesis. Involved in the gluconeogenesis. Catalyzes the conversion of oxaloacetate (OAA) to phosphoenolpyruvate (PEP) through direct phosphoryl transfer between the nucleoside triphosphate and OAA. The chain is Phosphoenolpyruvate carboxykinase (ATP) from Geobacillus kaustophilus (strain HTA426).